Reading from the N-terminus, the 268-residue chain is Phosphatidylglycerol--prolipoprotein diacylglyceryl transferase (268 aa).

Helical transmembrane passes span 14 to 34 (LGPI…FAGW), 57 to 77 (LTFY…IIFY), 90 to 110 (FFLW…LIAF), and 117 to 137 (IGAN…IGLG). Arg-140 serves as a coordination point for a 1,2-diacyl-sn-glycero-3-phospho-(1'-sn-glycerol). 3 helical membrane-spanning segments follow: residues 174–194 (QLFE…LVTI), 200–220 (YLVL…CEFF), and 238–258 (GQIL…AVFI).

This sequence belongs to the Lgt family.

It is found in the cell inner membrane. The catalysed reaction is L-cysteinyl-[prolipoprotein] + a 1,2-diacyl-sn-glycero-3-phospho-(1'-sn-glycerol) = an S-1,2-diacyl-sn-glyceryl-L-cysteinyl-[prolipoprotein] + sn-glycerol 1-phosphate + H(+). It participates in protein modification; lipoprotein biosynthesis (diacylglyceryl transfer). Its function is as follows. Catalyzes the transfer of the diacylglyceryl group from phosphatidylglycerol to the sulfhydryl group of the N-terminal cysteine of a prolipoprotein, the first step in the formation of mature lipoproteins. The polypeptide is Phosphatidylglycerol--prolipoprotein diacylglyceryl transferase (Francisella tularensis subsp. mediasiatica (strain FSC147)).